A 200-amino-acid chain; its full sequence is Dephospho-CoA kinase (200 aa).

The DPCK domain maps to 3–200 (IIGLTGGIGS…LWQRFATQVE (198 aa)). An ATP-binding site is contributed by 11 to 16 (GSGKST).

This sequence belongs to the CoaE family.

It is found in the cytoplasm. The enzyme catalyses 3'-dephospho-CoA + ATP = ADP + CoA + H(+). It functions in the pathway cofactor biosynthesis; coenzyme A biosynthesis; CoA from (R)-pantothenate: step 5/5. Its function is as follows. Catalyzes the phosphorylation of the 3'-hydroxyl group of dephosphocoenzyme A to form coenzyme A. The sequence is that of Dephospho-CoA kinase from Corynebacterium diphtheriae (strain ATCC 700971 / NCTC 13129 / Biotype gravis).